We begin with the raw amino-acid sequence, 979 residues long: Calsyntenin-1 (979 aa).

An N-terminal signal peptide occupies residues 1 to 28; the sequence is MLRRPAPALAPAVRLLLAGLLCGGGVWA. Residues 29–859 are Extracellular-facing; it reads ARVNKHKPWL…PHPFAVVPST (831 aa). 2 Cadherin domains span residues 38–164 and 165–265; these read LEPT…APVF and KEKS…SPGW. Asn346, Asn366, and Asn515 each carry an N-linked (GlcNAc...) asparagine glycan. A helical transmembrane segment spans residues 860–880; it reads ATVVIVVCVSFLVFMIILGVF. At 881 to 979 the chain is on the cytoplasmic side; sequence RIRAAHQRTM…LEWDDSTLSY (99 aa). Residues 915 to 979 form a disordered region; sequence METYEDQHSS…LEWDDSTLSY (65 aa). Residues 925–959 are compositionally biased toward acidic residues; the sequence is EEEEEEEEEEESEDGEEEEDITSAESESSEEEEGG.

It belongs to the calsyntenin family. In terms of assembly, directly interacts with APBA2. Forms a tripartite complex with APBA2 and APP. The CTF1 chain interacts with PSEN1. Interacts with KLC1 and APBB1. Interacts with APBB1; this interaction stabilizes AlcICD metabolism. As to quaternary structure, interacts with PSEN1. Post-translationally, proteolytically processed under normal cellular conditions. A primary zeta-cleavage generates a large extracellular (soluble) N-terminal domain (sAlc) and a short C-terminal transmembrane fragment (CTF1). A secondary cleavage catalyzed by presenilin gamma-secretase within the transmembrane domain releases the beta-Alc-alpha chain in the extracellular milieu and produces an intracellular fragment (AlcICD). Beta-Alc-alpha secretion is largely dependent upon PSEN1 and PSEN2. This processing is strongly suppressed in the tripartite complex formed with APBA2 and APP, which seems to prevent the association with PSEN1. In terms of tissue distribution, highly expressed in the brain (at protein level), with over 90% of the neurons expressing detectable amounts. In the brain, relatively high levels in the cerebral cortex, striatum, hippocampus and thalamus. Moderate levels in the cerebellum. Low levels in the olfactory bulb, midbrain and pons (at protein level). Not detected in Purkinje cells. Expressed at low levels in the lung (at protein level). At the mRNA level, weakly detected in the kidney, lung, skeletal muscle, heart and testis. Not expressed in the sciatic nerve fiber.

The protein resides in the postsynaptic cell membrane. The protein localises to the endoplasmic reticulum membrane. Its subcellular location is the golgi apparatus membrane. It localises to the cell projection. It is found in the neuron projection. The protein resides in the vesicle. The protein localises to the nucleus. Its function is as follows. Postsynaptic adhesion molecule that binds to presynaptic neurexins to mediate both excitatory and inhibitory synapse formation. Promotes synapse development by acting as a cell adhesion molecule at the postsynaptic membrane, which associates with neurexin-alpha at the presynaptic membrane. Also functions as a cargo in axonal anterograde transport by acting as a molecular adapter that promotes KLC1 association with vesicles. Complex formation with APBA2 and APP, stabilizes APP metabolism and enhances APBA2-mediated suppression of beta-APP40 secretion, due to the retardation of intracellular APP maturation. Functionally, as intracellular fragment AlcICD, suppresses APBB1-dependent transactivation stimulated by APP C-terminal intracellular fragment (AICD), most probably by competing with AICD for APBB1-binding. In complex with APBA2 and C99, a C-terminal APP fragment, abolishes C99 interaction with PSEN1 and thus APP C99 cleavage by gamma-secretase, most probably through stabilization of the direct interaction between APBA2 and APP. The protein is Calsyntenin-1 of Mus musculus (Mouse).